The following is a 217-amino-acid chain: Adenylate kinase (217 aa).

An ATP-binding site is contributed by 10–15 (GAGKGT). The segment at 30 to 59 (STGDLFRANISQQTELGKLAKSYMNAGNLV) is NMP. AMP is bound by residues Thr-31, Arg-36, 57 to 59 (NLV), 85 to 88 (GFPR), and Gln-92. The interval 126 to 164 (GRRVCRNEPKHVFHVTYTPPKKEGVCDVCGGELYQRDDD) is LID. Residues Arg-127 and 137–138 (VF) contribute to the ATP site. Arg-161 and Arg-172 together coordinate AMP. Gly-200 contacts ATP.

It belongs to the adenylate kinase family. Monomer.

Its subcellular location is the cytoplasm. The catalysed reaction is AMP + ATP = 2 ADP. It functions in the pathway purine metabolism; AMP biosynthesis via salvage pathway; AMP from ADP: step 1/1. In terms of biological role, catalyzes the reversible transfer of the terminal phosphate group between ATP and AMP. Plays an important role in cellular energy homeostasis and in adenine nucleotide metabolism. In Streptomyces coelicolor (strain ATCC BAA-471 / A3(2) / M145), this protein is Adenylate kinase.